The sequence spans 558 residues: Glucose-6-phosphate isomerase (558 aa).

An N-acetylalanine modification is found at A2. K12 carries the N6-acetyllysine modification. K34 is subject to N6-(2-hydroxyisobutyryl)lysine. At S107 the chain carries Phosphoserine. T109 is modified (phosphothreonine). K142 is modified (N6-acetyllysine). 159-160 (GS) serves as a coordination point for D-glucose 6-phosphate. S185 carries the post-translational modification Phosphoserine; by CK2. 210–215 (SKTFTT) serves as a coordination point for D-glucose 6-phosphate. T250 carries the phosphothreonine modification. The D-glucose 6-phosphate site is built by Q354, E358, and H389. Residue E358 is the Proton donor of the active site. H389 is an active-site residue. The residue at position 454 (K454) is an N6-acetyllysine; alternate. Residue K454 is modified to N6-malonyllysine; alternate. N6-succinyllysine; alternate is present on K454. S455 carries the phosphoserine modification. K519 lines the D-glucose 6-phosphate pocket. The active site involves K519.

It belongs to the GPI family. As to quaternary structure, homodimer; in the catalytically active form. Monomer in the secreted form. In terms of processing, phosphorylation at Ser-185 by CK2 has been shown to decrease enzymatic activity and may contribute to secretion by a non-classical secretory pathway. ISGylated.

The protein resides in the cytoplasm. The protein localises to the secreted. The enzyme catalyses alpha-D-glucose 6-phosphate = beta-D-fructose 6-phosphate. The protein operates within carbohydrate degradation; glycolysis; D-glyceraldehyde 3-phosphate and glycerone phosphate from D-glucose: step 2/4. Its function is as follows. In the cytoplasm, catalyzes the conversion of glucose-6-phosphate to fructose-6-phosphate, the second step in glycolysis, and the reverse reaction during gluconeogenesis. Besides it's role as a glycolytic enzyme, also acts as a secreted cytokine: acts as an angiogenic factor (AMF) that stimulates endothelial cell motility. Acts as a neurotrophic factor, neuroleukin, for spinal and sensory neurons. It is secreted by lectin-stimulated T-cells and induces immunoglobulin secretion. The polypeptide is Glucose-6-phosphate isomerase (Macaca fascicularis (Crab-eating macaque)).